A 349-amino-acid polypeptide reads, in one-letter code: ATPase GET3 (349 aa).

An ATP-binding site is contributed by 26 to 33 (KGGVGKTT). The active site involves aspartate 57. The ATP site is built by glutamate 242 and asparagine 269. Cysteine 281 and cysteine 284 together coordinate Zn(2+).

It belongs to the arsA ATPase family. In terms of assembly, homodimer. Component of the Golgi to ER traffic (GET) complex, which is composed of GET1, GET2 and GET3. Within the complex, GET1 and GET2 form a heterotetramer which is stabilized by phosphatidylinositol binding and which binds to the GET3 homodimer. Interacts with the chloride channel protein GEF1.

It is found in the cytoplasm. The protein resides in the endoplasmic reticulum. Its subcellular location is the golgi apparatus. ATPase required for the post-translational delivery of tail-anchored (TA) proteins to the endoplasmic reticulum. Recognizes and selectively binds the transmembrane domain of TA proteins in the cytosol. This complex then targets to the endoplasmic reticulum by membrane-bound receptors GET1 and GET2, where the tail-anchored protein is released for insertion. This process is regulated by ATP binding and hydrolysis. ATP binding drives the homodimer towards the closed dimer state, facilitating recognition of newly synthesized TA membrane proteins. ATP hydrolysis is required for insertion. Subsequently, the homodimer reverts towards the open dimer state, lowering its affinity for the GET1-GET2 receptor, and returning it to the cytosol to initiate a new round of targeting. Cooperates with the HDEL receptor ERD2 to mediate the ATP-dependent retrieval of resident ER proteins that contain a C-terminal H-D-E-L retention signal from the Golgi to the ER. Involved in low-level resistance to the oxyanions arsenite and arsenate, and in heat tolerance. The protein is ATPase GET3 of Candida tropicalis (strain ATCC MYA-3404 / T1) (Yeast).